A 441-amino-acid polypeptide reads, in one-letter code: MSRKYLLSLLLVGALVISVVASGCIGGSQTPTSSPTKTQQVQELEIYHWWTAGGEKEAFDALAKKFEKKYPNIKIKANPVSGGGGVNLKMVLQSLMLAGKPPDTFQVHAGYEMARYIKANQLTPIDDIWTEDMKKNYPKVIQQMVIFNNHYYAVPINVHRANVIWYNKQIFKKYGIDPSSIKTIDDLFAVAEKLKENGVTPFALGDRNKWPATQVFEVMLVAVGGVDYYEKFINGEISANDPTLKKVLEYFVKYVEYSNPDHAAKTWDEACALVYKGEAAMTLMGDWANGYFKAKGWKPNVDYGAIPIPAGVYDLVIDTFVLPAKAAHPNAAKKWLSFIGTVEAQNTFNPIKGSIPPRKDAPADPYDPIQKSFIKELSSSETKLIPSIAHGSAVPEAFLADLNDIISELATSKDVNKAATEIINAMKKDLLPNKIKEWHLS.

A signal peptide spans 1 to 23; that stretch reads MSRKYLLSLLLVGALVISVVASG. Position 24 is an N-acetylcysteine (Cys-24). A lipid anchor (S-archaeol cysteine) is attached at Cys-24.

The protein belongs to the bacterial solute-binding protein 1 family.

It localises to the cell membrane. In terms of biological role, probably part of a binding-protein-dependent transport system PH1214/15/16. This is an uncharacterized protein from Pyrococcus horikoshii (strain ATCC 700860 / DSM 12428 / JCM 9974 / NBRC 100139 / OT-3).